We begin with the raw amino-acid sequence, 357 residues long: tRNA-specific 2-thiouridylase MnmA (357 aa).

ATP-binding positions include 7–14 (GLSGGVDS) and Leu33. Catalysis depends on Cys94, which acts as the Nucleophile. Residues Cys94 and Cys193 are joined by a disulfide bond. Gly119 lines the ATP pocket. The interval 143-145 (KDQ) is interaction with tRNA. Cys193 functions as the Cysteine persulfide intermediate in the catalytic mechanism. Residues 298 to 299 (RY) form an interaction with tRNA region.

Belongs to the MnmA/TRMU family.

It is found in the cytoplasm. It carries out the reaction S-sulfanyl-L-cysteinyl-[protein] + uridine(34) in tRNA + AH2 + ATP = 2-thiouridine(34) in tRNA + L-cysteinyl-[protein] + A + AMP + diphosphate + H(+). Its function is as follows. Catalyzes the 2-thiolation of uridine at the wobble position (U34) of tRNA, leading to the formation of s(2)U34. The chain is tRNA-specific 2-thiouridylase MnmA from Synechococcus sp. (strain ATCC 27144 / PCC 6301 / SAUG 1402/1) (Anacystis nidulans).